The following is a 103-amino-acid chain: Large ribosomal subunit protein bL21 (103 aa).

The protein belongs to the bacterial ribosomal protein bL21 family. In terms of assembly, part of the 50S ribosomal subunit. Contacts protein L20.

Functionally, this protein binds to 23S rRNA in the presence of protein L20. This is Large ribosomal subunit protein bL21 from Pectobacterium carotovorum subsp. carotovorum (strain PC1).